Reading from the N-terminus, the 453-residue chain is UDP-glycosyltransferase 79B3 (453 aa).

UDP-alpha-D-glucose is bound by residues S266, 325–327 (VQQ), 342–350 (HCGFGSMWE), and 364–367 (LGDQ).

Belongs to the UDP-glycosyltransferase family.

The polypeptide is UDP-glycosyltransferase 79B3 (UGT79B3) (Arabidopsis thaliana (Mouse-ear cress)).